A 627-amino-acid chain; its full sequence is uncharacterized protein (627 aa).

Residues 1–20 (MAKFKKDLTTKNKDTDRLSE) are compositionally biased toward basic and acidic residues. Disordered regions lie at residues 1–22 (MAKF…SEEI) and 578–606 (LSLG…LLPV). The span at 582 to 592 (SEEEQGQEETE) shows a compositional bias: acidic residues.

This is an uncharacterized protein from Rickettsia prowazekii (strain Madrid E).